Consider the following 181-residue polypeptide: Transcription termination/antitermination protein NusG (181 aa).

A KOW domain is found at P130–S161.

It belongs to the NusG family. In terms of assembly, monomer. Interacts with the transcription termination factor Rho and with RNA polymerase.

Its function is as follows. Participates in transcription elongation, termination and antitermination. In the absence of Rho, increases the rate of transcription elongation by the RNA polymerase (RNAP), probably by partially suppressing pausing. In the presence of Rho, modulates most Rho-dependent termination events by interacting with the RNAP to render the complex more susceptible to the termination activity of Rho. May be required to overcome a kinetic limitation of Rho to function at certain terminators. Also involved in ribosomal RNA transcriptional antitermination. The chain is Transcription termination/antitermination protein NusG from Shigella flexneri.